The sequence spans 356 residues: MYANALVCLNPSFIKLQFHIVCTMNIIGIVTLALCSAASAADEGAAYNLQRAPDYFESFVENYNKNYTSDWEKNKRYSIFKDNLHEINAKNGNATDGPTATYKINKFSDLSKSELIAKFTGLSIPERVSNFCKTIILNQPPDKGPLHFDWREQNKVTSIKNQGACGACWAFATLASVESQFAMRHNRLIDLSEQQLIDCDSVDMGCNGGLLHTAFEEIMRMGGVQTELDYPFVGRNRRCGLDRHRPYVVSLVGCYRYVMVNEEKLKDLLRAVGPIPMAIDAADIVNYYRGVISSCENNGLNHAVLLVGYGVENGVPYWVFKNTWGDDWGENGYFRVRQNVNACGMVNDLASTAVLA.

A signal peptide spans 1-40 (MYANALVCLNPSFIKLQFHIVCTMNIIGIVTLALCSAASA). The propeptide at 41–144 (ADEGAAYNLQ…IILNQPPDKG (104 aa)) is activation peptide. 3 disulfides stabilise this stretch: Cys165-Cys206, Cys199-Cys239, and Cys295-Cys343. Cys168 is a catalytic residue. Catalysis depends on residues His302 and Asn322.

This sequence belongs to the peptidase C1 family. Synthesized as an inactive proenzyme and activated by proteolytic removal of the inhibitory propeptide.

It catalyses the reaction Endopeptidase of broad specificity, hydrolyzing substrates of both cathepsin L and cathepsin B.. Cysteine protease that plays an essential role in host liquefaction to facilitate horizontal transmission of the virus. May participate in the degradation of foreign protein expressed by the baculovirus system. This Lepidoptera (butterflies and moths) protein is Viral cathepsin (VCATH).